Here is a 200-residue protein sequence, read N- to C-terminus: UPF0301 protein BruAb1_0502 (200 aa).

Belongs to the UPF0301 (AlgH) family.

The protein is UPF0301 protein BruAb1_0502 of Brucella abortus biovar 1 (strain 9-941).